We begin with the raw amino-acid sequence, 1140 residues long: Condensin-2 complex subunit G2 (1140 aa).

The stretch at 460–493 (LLPALKSSLHDSSEKVRVAFVGMLLKIKAARAAK) is one HEAT repeat.

In terms of assembly, component of the condensin-2 complex, which contains the smc2 and smc4 heterodimer, and three non SMC subunits that probably regulate the complex: ncaph2, ncapd3 and ncapg2.

The protein resides in the nucleus. Its function is as follows. Regulatory subunit of the condensin-2 complex, a complex which establishes mitotic chromosome architecture and is involved in physical rigidity of the chromatid axis. Plays a role in the embryonic development of the head and kidney structures. This chain is Condensin-2 complex subunit G2, found in Danio rerio (Zebrafish).